A 200-amino-acid polypeptide reads, in one-letter code: NADH-quinone oxidoreductase subunit C (200 aa).

It belongs to the complex I 30 kDa subunit family. As to quaternary structure, NDH-1 is composed of 14 different subunits. Subunits NuoB, C, D, E, F, and G constitute the peripheral sector of the complex.

Its subcellular location is the cell inner membrane. The enzyme catalyses a quinone + NADH + 5 H(+)(in) = a quinol + NAD(+) + 4 H(+)(out). Its function is as follows. NDH-1 shuttles electrons from NADH, via FMN and iron-sulfur (Fe-S) centers, to quinones in the respiratory chain. The immediate electron acceptor for the enzyme in this species is believed to be ubiquinone. Couples the redox reaction to proton translocation (for every two electrons transferred, four hydrogen ions are translocated across the cytoplasmic membrane), and thus conserves the redox energy in a proton gradient. In Thiobacillus denitrificans (strain ATCC 25259 / T1), this protein is NADH-quinone oxidoreductase subunit C.